Consider the following 65-residue polypeptide: Sarcoplasmic/endoplasmic reticulum calcium ATPase regulator ARLN (65 aa).

An N-acetylmethionine modification is found at Met1. Positions 1–38 (MEVGQAASGTDGVRERRGSSAARRRSQDEPVQSGMNGI) are disordered. 2 positions are modified to phosphoserine: Ser19 and Ser26. A helical membrane pass occupies residues 44–64 (WLDLWLFILFDLALFIFVYLL).

In terms of assembly, homooligomer. Can also form heterooligomers with other sarcoplasmic/endoplasmic reticulum calcium ATPase (SERCA) regulators ERLN, PLN, SLN and STRIT1/DWORF. Monomer. Interacts as a monomer with ATP2A2/SERCA2; the interaction results in inhibition of ATP2A2 Ca(2+) affinity.

It is found in the endoplasmic reticulum membrane. Its function is as follows. Inhibits the activity of the calcium ATPases ATP2A2/SERCA2 and ATP2A3/SERCA3 by decreasing their apparent affinity for Ca(2+). This chain is Sarcoplasmic/endoplasmic reticulum calcium ATPase regulator ARLN (Arln), found in Rattus norvegicus (Rat).